The primary structure comprises 470 residues: Sulfate adenylyltransferase subunit 1 (470 aa).

The tr-type G domain maps to 22 to 238 (KELLRFITCG…ETIKIDYAYT (217 aa)). The segment at 31-38 (GSVDDGKS) is G1. 31–38 (GSVDDGKS) lines the GTP pocket. The interval 89-93 (GITID) is G2. Residues 110 to 113 (DTPG) are G3. GTP contacts are provided by residues 110 to 114 (DTPGH) and 165 to 168 (NKMD). The tract at residues 165-168 (NKMD) is G4. The segment at 202–204 (SAL) is G5.

Belongs to the TRAFAC class translation factor GTPase superfamily. Classic translation factor GTPase family. CysN/NodQ subfamily. Heterodimer composed of CysD, the smaller subunit, and CysN.

The catalysed reaction is sulfate + ATP + H(+) = adenosine 5'-phosphosulfate + diphosphate. It functions in the pathway sulfur metabolism; hydrogen sulfide biosynthesis; sulfite from sulfate: step 1/3. Functionally, with CysD forms the ATP sulfurylase (ATPS) that catalyzes the adenylation of sulfate producing adenosine 5'-phosphosulfate (APS) and diphosphate, the first enzymatic step in sulfur assimilation pathway. APS synthesis involves the formation of a high-energy phosphoric-sulfuric acid anhydride bond driven by GTP hydrolysis by CysN coupled to ATP hydrolysis by CysD. This chain is Sulfate adenylyltransferase subunit 1, found in Francisella tularensis subsp. tularensis (strain SCHU S4 / Schu 4).